The primary structure comprises 79 residues: D-alanyl carrier protein (79 aa).

The Carrier domain occupies 1–77 (MDIKSEVLKI…KIIEGITELR (77 aa)). An O-(pantetheine 4'-phosphoryl)serine modification is found at Ser-35.

It belongs to the DltC family. Post-translationally, 4'-phosphopantetheine is transferred from CoA to a specific serine of apo-DCP.

The protein localises to the cytoplasm. Its pathway is cell wall biogenesis; lipoteichoic acid biosynthesis. In terms of biological role, carrier protein involved in the D-alanylation of lipoteichoic acid (LTA). The loading of thioester-linked D-alanine onto DltC is catalyzed by D-alanine--D-alanyl carrier protein ligase DltA. The DltC-carried D-alanyl group is further transferred to cell membrane phosphatidylglycerol (PG) by forming an ester bond, probably catalyzed by DltD. D-alanylation of LTA plays an important role in modulating the properties of the cell wall in Gram-positive bacteria, influencing the net charge of the cell wall. This Streptococcus mutans serotype c (strain ATCC 700610 / UA159) protein is D-alanyl carrier protein.